We begin with the raw amino-acid sequence, 209 residues long: Small ribosomal subunit protein uS4 (209 aa).

The segment covering 1-13 has biased composition (basic residues); the sequence is MSTKSRTRSKTRL. Disordered stretches follow at residues 1 to 20 and 28 to 49; these read MSTK…LGIP and YLEK…QDSD. An S4 RNA-binding domain is found at 95–160; the sequence is QRLDALVVRS…TEPFQVAAAG (66 aa).

It belongs to the universal ribosomal protein uS4 family. As to quaternary structure, part of the 30S ribosomal subunit. Contacts protein S5. The interaction surface between S4 and S5 is involved in control of translational fidelity.

Functionally, one of the primary rRNA binding proteins, it binds directly to 16S rRNA where it nucleates assembly of the body of the 30S subunit. In terms of biological role, with S5 and S12 plays an important role in translational accuracy. The chain is Small ribosomal subunit protein uS4 from Clavibacter sepedonicus (Clavibacter michiganensis subsp. sepedonicus).